We begin with the raw amino-acid sequence, 213 residues long: Dimethylamine corrinoid protein 1 (213 aa).

In terms of domain architecture, B12-binding N-terminal spans 1 to 90; it reads MSKEELLQEL…LMPEGSASSK (90 aa). Positions 91-213 constitute a B12-binding domain; sequence MGVIVNGTVE…AVAKAKELLA (123 aa). His104 contacts methylcob(III)alamin.

It belongs to the methylamine corrinoid protein family.

It functions in the pathway one-carbon metabolism; methanogenesis from dimethylamine. Acts as a methyl group carrier between MtbB and MtbA. The sequence is that of Dimethylamine corrinoid protein 1 (mtbC1) from Methanosarcina acetivorans (strain ATCC 35395 / DSM 2834 / JCM 12185 / C2A).